The chain runs to 181 residues: ADP-ribosylation factor 1 (181 aa).

The N-myristoyl glycine moiety is linked to residue G2. The important for the stable binding to the membranes stretch occupies residues 3–16; that stretch reads LYVSRLFNRLFQKK. GTP contacts are provided by residues 27 to 32, 126 to 129, and A160; these read AAGKTT and NKQD.

It belongs to the small GTPase superfamily. Arf family. May interact with GTPase RAB5b.

It is found in the golgi apparatus membrane. It carries out the reaction GTP + H2O = GDP + phosphate + H(+). Its activity is regulated as follows. Alternates between an inactive GDP-bound form and an active GTP-bound form. Intrinsic GTPase activity is almost undetectable in vitro. Activated by a guanine nucleotide-exchange factor (GEF) and inactivated by GTPase-activating protein ARFGAP1. Small GTPase involved in protein trafficking between different compartments. Modulates vesicle budding and uncoating within the Golgi complex. In its GTP-bound form, triggers the recruitment of coatomer proteins to the Golgi membrane. The hydrolysis of ARF1-bound GTP, which is mediated by ARFGAPs proteins, is required for dissociation of coat proteins from Golgi membranes and vesicles. Regulates the transport of N-acylated AK2 to the parasitophorous vacuole membrane. May be involved in the activation of lipid kinase PIP5K. In Plasmodium falciparum (isolate 3D7), this protein is ADP-ribosylation factor 1.